Consider the following 37-residue polypeptide: Large ribosomal subunit protein bL36 (37 aa).

It belongs to the bacterial ribosomal protein bL36 family.

The protein is Large ribosomal subunit protein bL36 of Laribacter hongkongensis (strain HLHK9).